The chain runs to 229 residues: Peptidase E (229 aa).

Residues Ser-120, Asp-135, and His-157 each act as charge relay system in the active site.

Belongs to the peptidase S51 family.

It is found in the cytoplasm. The enzyme catalyses Dipeptidase E catalyzes the hydrolysis of dipeptides Asp-|-Xaa. It does not act on peptides with N-terminal Glu, Asn or Gln, nor does it cleave isoaspartyl peptides.. Functionally, hydrolyzes dipeptides containing N-terminal aspartate residues. May play a role in allowing the cell to use peptide aspartate to spare carbon otherwise required for the synthesis of the aspartate family of amino acids. This Salmonella typhi protein is Peptidase E.